The following is a 97-amino-acid chain: YcgL domain-containing protein CKO_01183 (97 aa).

Residues 1–85 (MFCVIYRSSK…PPEDLLKQHL (85 aa)) enclose the YcgL domain. The tract at residues 74 to 97 (PPPPEDLLKQHLSAPGENKPDAKS) is disordered.

The polypeptide is YcgL domain-containing protein CKO_01183 (Citrobacter koseri (strain ATCC BAA-895 / CDC 4225-83 / SGSC4696)).